The sequence spans 321 residues: Glucokinase (321 aa).

8–13 (GDVGGT) serves as a coordination point for ATP.

Belongs to the bacterial glucokinase family.

It localises to the cytoplasm. It carries out the reaction D-glucose + ATP = D-glucose 6-phosphate + ADP + H(+). The chain is Glucokinase from Shigella sonnei (strain Ss046).